Consider the following 171-residue polypeptide: Large ribosomal subunit protein bL9 (171 aa).

The protein belongs to the bacterial ribosomal protein bL9 family.

Binds to the 23S rRNA. This Rickettsia akari (strain Hartford) protein is Large ribosomal subunit protein bL9.